Consider the following 166-residue polypeptide: Transcription factor HES-5 (166 aa).

The region spanning 16–72 (KNRLRKPVVEKMRRDRINSSIEQLKLLLEQEFARHQPNSKLEKADILEMAVSYLKHS) is the bHLH domain. The Orange domain occupies 88–119 (YSEGYSWCLQEAVQFLTLHAASDTQMKLLYHF). The tract at residues 125–166 (PAAPVKETPTPGAAPQPARSSTKAAASVSTSRQSACGLWRPW) is disordered. The segment covering 142–156 (ARSSTKAAASVSTSR) has biased composition (low complexity). The short motif at 163–166 (WRPW) is the WRPW motif element.

Transcription repression requires formation of a complex with a corepressor protein of the Groucho/TLE family. As to expression, expressed predominantly in embryonic neural lineage cells.

It localises to the nucleus. Its function is as follows. Transcriptional repressor of genes that require a bHLH protein for their transcription. Plays an important role as neurogenesis negative regulator. This is Transcription factor HES-5 (Hes5) from Rattus norvegicus (Rat).